We begin with the raw amino-acid sequence, 271 residues long: Probable diacyglycerol O-acyltransferase tgs3 (271 aa).

Belongs to the long-chain O-acyltransferase family.

It catalyses the reaction an acyl-CoA + a 1,2-diacyl-sn-glycerol = a triacyl-sn-glycerol + CoA. The protein operates within glycerolipid metabolism; triacylglycerol biosynthesis. Catalyzes the terminal and only committed step in triacylglycerol synthesis by using diacylglycerol and fatty acyl CoA as substrates. Required for storage lipid synthesis. The polypeptide is Probable diacyglycerol O-acyltransferase tgs3 (tgs3) (Mycobacterium tuberculosis (strain CDC 1551 / Oshkosh)).